The following is a 131-amino-acid chain: Histone H2B.1 (131 aa).

The segment covering 1–19 has biased composition (basic and acidic residues); the sequence is MSAKAEKKPASKAPAEKKP. Positions 1–38 are disordered; sequence MSAKAEKKPASKAPAEKKPAAKKTSTSTDGKKRSKARK. 2 positions are modified to N6-acetyllysine; alternate: lysine 7 and lysine 8. Glycyl lysine isopeptide (Lys-Gly) (interchain with G-Cter in SUMO); alternate cross-links involve residues lysine 7 and lysine 8. Serine 11 bears the Phosphoserine mark. At lysine 12 the chain carries N6-acetyllysine. N6-acetyllysine; alternate occurs at positions 17, 18, 22, and 23. Glycyl lysine isopeptide (Lys-Gly) (interchain with G-Cter in SUMO); alternate cross-links involve residues lysine 17 and lysine 18. Lysine 22 bears the N6-butyryllysine; alternate mark. Lysine 23 is subject to N6-methyllysine; alternate. Lysine 35 is subject to N6-succinyllysine. Lysine 38 is subject to N6,N6-dimethyllysine. Residue lysine 47 is modified to N6-succinyllysine. A Glycyl lysine isopeptide (Lys-Gly) (interchain with G-Cter in ubiquitin) cross-link involves residue lysine 124.

Belongs to the histone H2B family. As to quaternary structure, the nucleosome is a histone octamer containing two molecules each of H2A, H2B, H3 and H4 assembled in one H3-H4 heterotetramer and two H2A-H2B heterodimers. The octamer wraps approximately 147 bp of DNA. Monoubiquitinated by the RAD6/UBC2-BRE1 complex to form H2BK123ub1. H2BK123ub1 gives a specific tag for epigenetic transcriptional activation and is also prerequisite for H3K4me and H3K79me formation. H2BK123ub1 also modulates the formation of double-strand breaks during meiosis and is a prerequisite for DNA-damage checkpoint activation. Deubiquitination is performed by UBP8 in presence of SGF11. Post-translationally, phosphorylated by STE20 to form H2BS10ph during progression through meiotic prophase. May be correlated with chromosome condensation. H2BS10ph is also formed after H(2)O(2) treatment, and is a step leading to apoptosis. In terms of processing, acetylated by GCN5, a component of the SAGA complex, to form H2BK11ac and H2BK16ac. H2BK16ac can also be formed by ESA1, a component of the NuA4 histone acetyltransferase (HAT) complex. Acetylation of N-terminal lysines and particularly formation of H2BK11acK16ac has a positive effect on transcription. Sumoylation to form H2BK6su or H2BK7su, and probably also H2BK16su or H2BK17su, occurs preferentially near the telomeres and represses gene transcription.

Its subcellular location is the nucleus. The protein localises to the chromosome. In terms of biological role, core component of nucleosome. Nucleosomes wrap and compact DNA into chromatin, limiting DNA accessibility to the cellular machineries which require DNA as a template. Histones thereby play a central role in transcription regulation, DNA repair, DNA replication and chromosomal stability. DNA accessibility is regulated via a complex set of post-translational modifications of histones, also called histone code, and nucleosome remodeling. The sequence is that of Histone H2B.1 (HTB1) from Saccharomyces cerevisiae (strain ATCC 204508 / S288c) (Baker's yeast).